A 358-amino-acid polypeptide reads, in one-letter code: Phosphoserine aminotransferase (358 aa).

Position 41 (R41) interacts with L-glutamate. Residues 75–76 (AS), W100, T148, D167, and Q190 contribute to the pyridoxal 5'-phosphate site. K191 is modified (N6-(pyridoxal phosphate)lysine). Residue 233–234 (NT) coordinates pyridoxal 5'-phosphate.

It belongs to the class-V pyridoxal-phosphate-dependent aminotransferase family. SerC subfamily. As to quaternary structure, homodimer. Requires pyridoxal 5'-phosphate as cofactor.

It localises to the cytoplasm. It carries out the reaction O-phospho-L-serine + 2-oxoglutarate = 3-phosphooxypyruvate + L-glutamate. The enzyme catalyses 4-(phosphooxy)-L-threonine + 2-oxoglutarate = (R)-3-hydroxy-2-oxo-4-phosphooxybutanoate + L-glutamate. Its pathway is amino-acid biosynthesis; L-serine biosynthesis; L-serine from 3-phospho-D-glycerate: step 2/3. It functions in the pathway cofactor biosynthesis; pyridoxine 5'-phosphate biosynthesis; pyridoxine 5'-phosphate from D-erythrose 4-phosphate: step 3/5. Its function is as follows. Catalyzes the reversible conversion of 3-phosphohydroxypyruvate to phosphoserine and of 3-hydroxy-2-oxo-4-phosphonooxybutanoate to phosphohydroxythreonine. This Campylobacter jejuni subsp. jejuni serotype O:23/36 (strain 81-176) protein is Phosphoserine aminotransferase.